A 329-amino-acid polypeptide reads, in one-letter code: Vomeronasal type-1 receptor 42 (329 aa).

The Extracellular portion of the chain corresponds to 1–32 (MGDILFSSPQSMFSHTMNKNSILHTHSIIGKT). A helical transmembrane segment spans residues 33–53 (FFSEIGIGISGNSFLLLVHIL). At 54–65 (KFIRGHRPRLTD) the chain is on the cytoplasmic side. A helical transmembrane segment spans residues 66–86 (LPIGLLSLIHLLMLLVAAFIA). The Extracellular segment spans residues 87–109 (TDIFISRRGWDDIICKFLVYLYR). The cysteines at positions 101 and 188 are disulfide-linked. The helical transmembrane segment at 110-130 (VLRGFSLCTTSMLSILQAIIL) threads the bilayer. Residues 131–150 (SPRSSCLAKFKHISPHHISG) are Cytoplasmic-facing. The helical transmembrane segment at 151–171 (AILFLSVLYMLIGSQLLVSII) threads the bilayer. Residues 172-209 (ATPNLTMNDFIYVTQSCSILPLSYLMQSIYSTLLAIRE) are Extracellular-facing. Asn175 carries an N-linked (GlcNAc...) asparagine glycan. A helical transmembrane segment spans residues 210–230 (FFLISLMVLSNWYMVALLSMH). At 231–254 (RKQTQHLHGTNLSPKKSPEQSATQ) the chain is on the cytoplasmic side. A helical membrane pass occupies residues 255 to 275 (TILMLISFFLLMTIYDTIVSC). Topologically, residues 276-285 (SRTMFLNDPT) are extracellular. The helical transmembrane segment at 286-306 (SYSIELFIMHIYATVSPFVFM) threads the bilayer. Topologically, residues 307–329 (STEKHIVNFLRSLGKRVINFNLH) are cytoplasmic.

It belongs to the G-protein coupled receptor 1 family.

The protein resides in the cell membrane. Functionally, putative pheromone receptor implicated in the regulation of social and reproductive behavior. The chain is Vomeronasal type-1 receptor 42 (Vmn1r42) from Mus musculus (Mouse).